A 320-amino-acid polypeptide reads, in one-letter code: Mitochondrial oxaloacetate transport protein (320 aa).

3 Solcar repeats span residues 21 to 114 (LGPV…IRRT), 126 to 218 (NKLA…AKRM), and 227 to 313 (EGMI…TNKL). A run of 6 helical transmembrane segments spans residues 26–47 (GFLS…FEVI), 91–111 (GTAY…YEPI), 129–145 (AINV…GALF), 197–217 (AILR…WAKR), 233–253 (LTAS…FDTV), and 285–306 (LYKG…CLTF).

It belongs to the mitochondrial carrier (TC 2.A.29) family.

Its subcellular location is the mitochondrion inner membrane. The catalysed reaction is a dicarboxylate(in) + sulfate(out) = a dicarboxylate(out) + sulfate(in). It carries out the reaction (2S)-2-isopropylmalate(in) + sulfate(out) = (2S)-2-isopropylmalate(out) + sulfate(in). It catalyses the reaction (2R,3S)-3-isopropylmalate(in) + sulfate(out) = (2R,3S)-3-isopropylmalate(out) + sulfate(in). The enzyme catalyses malonate(in) + sulfate(out) = malonate(out) + sulfate(in). The catalysed reaction is oxaloacetate(in) + sulfate(out) = oxaloacetate(out) + sulfate(in). It carries out the reaction thiosulfate(in) + sulfate(out) = thiosulfate(out) + sulfate(in). Its function is as follows. Antiporter that exchanges dicarboxylates and sulfur oxoanions across the inner membrane of mitochondria. Exports alpha-isopropylmalate from mitochondrial matrix to the cytosol, where it serves as a precursor for leucine biosynthesis. The polypeptide is Mitochondrial oxaloacetate transport protein (oac1) (Schizosaccharomyces pombe (strain 972 / ATCC 24843) (Fission yeast)).